Here is a 580-residue protein sequence, read N- to C-terminus: Acyl-coenzyme A synthetase ACSM3, mitochondrial (580 aa).

The transit peptide at 1–21 directs the protein to the mitochondrion; that stretch reads MVMLLRARCFQRLAIPDPMRV. 2 positions are modified to N6-succinyllysine: lysine 67 and lysine 100. Lysine 151 is modified (N6-acetyllysine). Residues 229–237, 368–373, aspartate 455, arginine 470, and lysine 566 contribute to the ATP site; these read TSGTTGPPK and EGYGQT.

It belongs to the ATP-dependent AMP-binding enzyme family. The cofactor is Mg(2+). Requires Mn(2+) as cofactor. Detected in kidney (at protein level). Detected in kidney proximal tubules and in liver. Detected at low levels in testis, stomach, heart and lung.

It localises to the mitochondrion. Its subcellular location is the mitochondrion matrix. The enzyme catalyses a medium-chain fatty acid + ATP + CoA = a medium-chain fatty acyl-CoA + AMP + diphosphate. It carries out the reaction propanoate + ATP + CoA = propanoyl-CoA + AMP + diphosphate. It catalyses the reaction butanoate + ATP + CoA = butanoyl-CoA + AMP + diphosphate. The catalysed reaction is 2-methylpropanoate + ATP + CoA = 2-methylpropanoyl-CoA + AMP + diphosphate. The enzyme catalyses 2-methylbutanoate + ATP + CoA = 2-methylbutanoyl-CoA + AMP + diphosphate. It carries out the reaction octanoate + ATP + CoA = octanoyl-CoA + AMP + diphosphate. Its function is as follows. Catalyzes the activation of fatty acids by CoA to produce an acyl-CoA, the first step in fatty acid metabolism. Capable of activating medium-chain fatty acids with a preference for isobutyrate among fatty acids with 2-6 carbon atoms. The protein is Acyl-coenzyme A synthetase ACSM3, mitochondrial (Acsm3) of Mus musculus (Mouse).